The sequence spans 396 residues: 1-deoxy-D-xylulose 5-phosphate reductoisomerase (396 aa).

Residues T15, G16, S17, I18, G41, and N129 each coordinate NADPH. A 1-deoxy-D-xylulose 5-phosphate-binding site is contributed by K130. E131 contributes to the NADPH binding site. D155 contributes to the Mn(2+) binding site. Residues S156, E157, S182, and H205 each contribute to the 1-deoxy-D-xylulose 5-phosphate site. E157 contributes to the Mn(2+) binding site. G211 contributes to the NADPH binding site. Positions 218, 223, 224, and 227 each coordinate 1-deoxy-D-xylulose 5-phosphate. E227 is a Mn(2+) binding site.

The protein belongs to the DXR family. Mg(2+) is required as a cofactor. Requires Mn(2+) as cofactor.

The enzyme catalyses 2-C-methyl-D-erythritol 4-phosphate + NADP(+) = 1-deoxy-D-xylulose 5-phosphate + NADPH + H(+). It functions in the pathway isoprenoid biosynthesis; isopentenyl diphosphate biosynthesis via DXP pathway; isopentenyl diphosphate from 1-deoxy-D-xylulose 5-phosphate: step 1/6. In terms of biological role, catalyzes the NADPH-dependent rearrangement and reduction of 1-deoxy-D-xylulose-5-phosphate (DXP) to 2-C-methyl-D-erythritol 4-phosphate (MEP). This Xanthomonas euvesicatoria pv. vesicatoria (strain 85-10) (Xanthomonas campestris pv. vesicatoria) protein is 1-deoxy-D-xylulose 5-phosphate reductoisomerase.